Here is a 207-residue protein sequence, read N- to C-terminus: Claudin-11 (207 aa).

Position 1 (M1) is a topological domain, cytoplasmic. A helical transmembrane segment spans residues V2–I22. Residues V23–R82 are Extracellular-facing. A helical membrane pass occupies residues A83–L103. The Cytoplasmic segment spans residues P104–L122. The chain crosses the membrane as a helical span at residues A123–V143. Over C144 to S157 the chain is Extracellular. A helical membrane pass occupies residues L158–C178. Residues A179–V207 lie on the Cytoplasmic side of the membrane. Phosphoserine occurs at positions 193, 194, 197, and 198.

Belongs to the claudin family. Interacts with tetraspanin-3/TSPAN3. Interacts with OCLN.

The protein resides in the cell junction. It localises to the tight junction. The protein localises to the cell membrane. In terms of biological role, plays a major role in tight junction-specific obliteration of the intercellular space, through calcium-independent cell-adhesion activity. This Bos taurus (Bovine) protein is Claudin-11 (CLDN11).